The sequence spans 464 residues: Citrate synthase, mitochondrial (464 aa).

The transit peptide at 1–27 directs the protein to the mitochondrion; the sequence is MALLTAAARLFGAKNASCLVLAARHAS. The short motif at 2–21 is the SIFI-degron element; it reads ALLTAAARLFGAKNASCLVL. Lys76 carries the N6-acetyllysine; alternate modification. At Lys76 the chain carries N6-succinyllysine; alternate. N6-succinyllysine occurs at positions 103 and 193. Phosphoserine is present on Ser226. His301 is an active-site residue. An N6-acetyllysine; alternate mark is found at Lys321 and Lys327. N6-succinyllysine; alternate is present on residues Lys321 and Lys327. Residue His347 is part of the active site. Oxaloacetate is bound at residue Arg356. Lys375 is modified (N6-acetyllysine; alternate). At Lys375 the chain carries N6-succinyllysine; alternate. Lys382 carries the post-translational modification N6-acetyllysine. Lys393 carries the post-translational modification N6-acetyllysine; alternate. Lys393 bears the N6-succinyllysine; alternate mark. Lys395 carries the post-translational modification N6,N6,N6-trimethyllysine. Asp402 is a catalytic residue. 2 residues coordinate oxaloacetate: Arg428 and Arg448. Position 450 is an N6-succinyllysine (Lys450). Residue Lys459 is modified to N6-acetyllysine; alternate. At Lys459 the chain carries N6-succinyllysine; alternate.

Belongs to the citrate synthase family. As to quaternary structure, homodimer. In terms of processing, methylated. Trimethylation at Lys-395 by CSKMT decreases citrate synthase activity. Post-translationally, in response to mitochondrial stress, the precursor protein is ubiquitinated by the SIFI complex in the cytoplasm before mitochondrial import, leading to its degradation. Within the SIFI complex, UBR4 initiates ubiquitin chain that are further elongated or branched by KCMF1.

It is found in the mitochondrion matrix. It carries out the reaction oxaloacetate + acetyl-CoA + H2O = citrate + CoA + H(+). It functions in the pathway carbohydrate metabolism; tricarboxylic acid cycle; isocitrate from oxaloacetate: step 1/2. Key enzyme of the Krebs tricarboxylic acid cycle which catalyzes the synthesis of citrate from acetyl coenzyme A and oxaloacetate. This Sus scrofa (Pig) protein is Citrate synthase, mitochondrial (CS).